Here is a 527-residue protein sequence, read N- to C-terminus: F-box protein SKIP2 (527 aa).

Residues 39–85 (DRDFTGDLPDECLAHVFQFLGAGDRKRCSLVCKRWLLVDGQSRHRLS) form the F-box domain.

In terms of assembly, part of a SCF (ASK-cullin-F-box) protein ligase complex. Interacts with SKP1A/ASK1, SKP1B/ASK2 and ASK11.

Its subcellular location is the nucleus. It functions in the pathway protein modification; protein ubiquitination. Its function is as follows. Component of SCF(ASK-cullin-F-box) E3 ubiquitin ligase complexes, which may mediate the ubiquitination and subsequent proteasomal degradation of target proteins. This is F-box protein SKIP2 (SKIP2) from Arabidopsis thaliana (Mouse-ear cress).